A 501-amino-acid chain; its full sequence is Cytochrome P450 6j1 (501 aa).

C444 contacts heme.

Belongs to the cytochrome P450 family. Heme is required as a cofactor.

The protein resides in the endoplasmic reticulum membrane. Its subcellular location is the microsome membrane. This chain is Cytochrome P450 6j1 (CYP6J1), found in Blattella germanica (German cockroach).